Reading from the N-terminus, the 216-residue chain is Cyclo(L-leucyl-L-leucyl) synthase (216 aa).

The active-site Nucleophile is Ser-14. Substrate contacts are provided by residues Asn-17, 155–159 (YIFDE), and Tyr-179.

Belongs to the CDPS family.

The catalysed reaction is 2 L-leucyl-tRNA(Leu) = cyclo(L-leucyl-L-leucyl) + 2 tRNA(Leu) + 2 H(+). Functionally, it uses activated amino acids in the form of aminoacyl-tRNAs (aa-tRNAs) as substrates to catalyze the ATP-independent formation of cyclodipeptides which are intermediates in diketopiperazine (DKP) biosynthetic pathways. Catalyzes the formation of cyclo(L-Leu-L-Leu) (cLL) from L-leucyl-tRNA(Leu). Can incorporate various nonpolar residues, such as L-leucine and L-methionine, into cyclodipeptides. The chain is Cyclo(L-leucyl-L-leucyl) synthase from Corynebacterium jeikeium (strain K411).